The chain runs to 382 residues: Queuine tRNA-ribosyltransferase (382 aa).

Residue Asp96 is the Proton acceptor of the active site. Residues 96 to 100 (DSGGF), Asp151, Gln194, and Gly221 contribute to the substrate site. The interval 252–258 (GVGAPDS) is RNA binding. The active-site Nucleophile is the Asp271. The tract at residues 276 to 280 (TRIAR) is RNA binding; important for wobble base 34 recognition. Residues Cys309, Cys311, Cys314, and His340 each coordinate Zn(2+).

This sequence belongs to the queuine tRNA-ribosyltransferase family. Homodimer. Within each dimer, one monomer is responsible for RNA recognition and catalysis, while the other monomer binds to the replacement base PreQ1. Zn(2+) is required as a cofactor.

It catalyses the reaction 7-aminomethyl-7-carbaguanine + guanosine(34) in tRNA = 7-aminomethyl-7-carbaguanosine(34) in tRNA + guanine. Its pathway is tRNA modification; tRNA-queuosine biosynthesis. Its function is as follows. Catalyzes the base-exchange of a guanine (G) residue with the queuine precursor 7-aminomethyl-7-deazaguanine (PreQ1) at position 34 (anticodon wobble position) in tRNAs with GU(N) anticodons (tRNA-Asp, -Asn, -His and -Tyr). Catalysis occurs through a double-displacement mechanism. The nucleophile active site attacks the C1' of nucleotide 34 to detach the guanine base from the RNA, forming a covalent enzyme-RNA intermediate. The proton acceptor active site deprotonates the incoming PreQ1, allowing a nucleophilic attack on the C1' of the ribose to form the product. After dissociation, two additional enzymatic reactions on the tRNA convert PreQ1 to queuine (Q), resulting in the hypermodified nucleoside queuosine (7-(((4,5-cis-dihydroxy-2-cyclopenten-1-yl)amino)methyl)-7-deazaguanosine). The protein is Queuine tRNA-ribosyltransferase of Lactococcus lactis subsp. cremoris (strain SK11).